The following is a 198-amino-acid chain: Glycerol-3-phosphate acyltransferase (198 aa).

6 helical membrane passes run 1–21 (MNLL…GYLA), 55–75 (VFLL…YLLL), 79–99 (WQVA…WLNW), 111–131 (IFLG…IIMI), 136–156 (IVSL…FLSF), and 158–178 (GSNL…LVIW).

This sequence belongs to the PlsY family. In terms of assembly, probably interacts with PlsX.

The protein resides in the cell inner membrane. It carries out the reaction an acyl phosphate + sn-glycerol 3-phosphate = a 1-acyl-sn-glycero-3-phosphate + phosphate. It participates in lipid metabolism; phospholipid metabolism. Functionally, catalyzes the transfer of an acyl group from acyl-phosphate (acyl-PO(4)) to glycerol-3-phosphate (G3P) to form lysophosphatidic acid (LPA). This enzyme utilizes acyl-phosphate as fatty acyl donor, but not acyl-CoA or acyl-ACP. The sequence is that of Glycerol-3-phosphate acyltransferase from Prochlorococcus marinus (strain NATL2A).